The following is a 412-amino-acid chain: Double C2-like domain-containing protein beta (412 aa).

The tract at residues 1-36 (MTLRRRGEKATISIQEHMAIDVCPGPIRPIKQISDY) is negatively regulates targeting to plasma membrane. The mediates interaction with DYNLT1 stretch occupies residues 1–90 (MTLRRRGEKA…EDVDQLFGAY (90 aa)). The interval 38-123 (PRFPRGLPPT…PDADGYESDD (86 aa)) is disordered. Over residues 49-73 (APRASAPPDAPARSPAATAGPRSPS) the composition is skewed to low complexity. The segment covering 95 to 108 (GPSPGPSPVRPPAK) has biased composition (pro residues). Residues 112–123 (DEPDADGYESDD) are compositionally biased toward acidic residues. 2 consecutive C2 domains span residues 126–250 (ALGT…SICL) and 266–399 (ERGR…ERWH). The Ca(2+) site is built by Asp-157, Asp-163, Asp-218, Asp-220, Asp-297, Asp-303, Asp-357, Asp-359, and Asp-365. A mediates interaction with STXBP3 region spans residues 257 to 375 (DKAEDKSLEE…FIGGVVLGIN (119 aa)). Ser-411 is modified (phosphoserine).

As to quaternary structure, interacts with STX4; the interaction is calcium-dependent, increased by insulin and glucose, and mediates vesicle fusion with plasma membrane in pancreatic cells and adipocytes. Interacts with STXBP3; the interaction is direct, occurs at the cell membrane and regulates glucose-stimulated insulin secretion. Interacts with cytoplasmic dynein light chain DYNLT1. Interacts with the SNARE (soluble N-ethylmaleimide-sensitive factor attached protein receptor) complex composed of SNAP25, STX1A and VAMP2; the interaction is calcium-dependent and competitive with SYT1. May interact with UNC13A; the interaction mediates targeting to the plasma membrane. It depends on Ca(2+) as a cofactor. As to expression, expressed in brain; highly enriched in neurons.

It localises to the cytoplasm. The protein resides in the cytoplasmic granule. Its subcellular location is the cell membrane. Its function is as follows. Calcium sensor which positively regulates SNARE-dependent fusion of vesicles with membranes. Binds phospholipids in a calcium-dependent manner and may act at the priming stage of fusion by modifying membrane curvature to stimulate fusion. Involved in calcium-triggered exocytosis in chromaffin cells and calcium-dependent spontaneous release of neurotransmitter in absence of action potentials in neuronal cells. Involved both in glucose-stimulated insulin secretion in pancreatic cells and insulin-dependent GLUT4 transport to the plasma membrane in adipocytes. The chain is Double C2-like domain-containing protein beta (Doc2b) from Rattus norvegicus (Rat).